We begin with the raw amino-acid sequence, 255 residues long: 4-diphosphocytidyl-2-C-methyl-D-erythritol kinase (255 aa).

K6 is a catalytic residue. 95–105 (PVCAGLGGGSS) is an ATP binding site. D137 is a catalytic residue.

Belongs to the GHMP kinase family. IspE subfamily.

The catalysed reaction is 4-CDP-2-C-methyl-D-erythritol + ATP = 4-CDP-2-C-methyl-D-erythritol 2-phosphate + ADP + H(+). Its pathway is isoprenoid biosynthesis; isopentenyl diphosphate biosynthesis via DXP pathway; isopentenyl diphosphate from 1-deoxy-D-xylulose 5-phosphate: step 3/6. Functionally, catalyzes the phosphorylation of the position 2 hydroxy group of 4-diphosphocytidyl-2C-methyl-D-erythritol. The chain is 4-diphosphocytidyl-2-C-methyl-D-erythritol kinase from Campylobacter jejuni subsp. doylei (strain ATCC BAA-1458 / RM4099 / 269.97).